The sequence spans 766 residues: Phospholipid phosphatase-related protein type 4 (766 aa).

Serine 37 bears the Phosphoserine mark. The next 3 helical transmembrane spans lie at 68–88 (LPCF…SLYF), 120–140 (AIPF…TIMV), and 179–199 (FVGV…IIQL). Asparagine 215 and asparagine 220 each carry an N-linked (GlcNAc...) asparagine glycan. Residues 248-268 (SFPSQHATLAAFAAVYVSMYF) traverse the membrane as a helical segment. Asparagine 269 is a glycosylation site (N-linked (GlcNAc...) asparagine). 2 helical membrane-spanning segments follow: residues 277 to 297 (KLLK…CGLT) and 309 to 329 (VYCG…YAVG). Serine 347 is modified (phosphoserine). Residue asparagine 363 is glycosylated (N-linked (GlcNAc...) asparagine). Serine 386 carries the phosphoserine modification. Asparagine 433 carries an N-linked (GlcNAc...) asparagine glycan. At serine 439 the chain carries Phosphoserine. The disordered stretch occupies residues 454–494 (SKNESRKMSLQVMDTEPEGQSPPRSIEMRSSSEPSRVGVNG). Asparagine 456 carries an N-linked (GlcNAc...) asparagine glycan. A phosphoserine mark is found at serine 462 and serine 474. Asparagine 515, asparagine 545, and asparagine 570 each carry an N-linked (GlcNAc...) asparagine glycan. Serine 608 is modified (phosphoserine). 3 disordered regions span residues 634 to 654 (PIIQ…KWKA), 672 to 701 (DSES…HHHH), and 742 to 766 (ERSN…AYKD). A compositionally biased stretch (basic and acidic residues) spans 672–697 (DSESCESLKDSFGSGDRKRSNIDSNE). The span at 743 to 752 (RSNSPENTRN) shows a compositional bias: polar residues.

This sequence belongs to the PA-phosphatase related phosphoesterase family. O-glycosylated. Probably at Ser-347. In terms of tissue distribution, brain-specific, it is exclusively expressed in neurons (at protein level).

The protein localises to the postsynaptic density membrane. Postsynaptic density membrane protein that indirectly regulates glutamatergic synaptic transmission through lysophosphatidic acid (LPA)-mediated signaling pathways. Binds lysophosphatidic acid (LPA) and mediates its internalization into cells. Could act as receptor or a transporter of this lipid at the post-synaptic membrane. Modulates lysophosphatidic acid (LPA) activity in neuron axonal outgrowth during development by attenuating phospholipid-induced axon collapse. The polypeptide is Phospholipid phosphatase-related protein type 4 (Mus musculus (Mouse)).